An 857-amino-acid polypeptide reads, in one-letter code: Protein app1 (857 aa).

Residues 6–133 (DTSTHGAEIR…NMDDIIRRVA (128 aa)) enclose the ADF-H domain. 3 disordered regions span residues 167-562 (AKVA…VPQR), 585-622 (EVPS…VPQR), and 693-723 (QLNE…TEHT). Over residues 193 to 204 (KDSKDNSWDDSS) the composition is skewed to basic and acidic residues. Over residues 205–217 (KQSNTQTANTTSN) the composition is skewed to low complexity. Basic and acidic residues predominate over residues 229–240 (AGRKEKSQENKP). 5 stretches are compositionally biased toward polar residues: residues 276-295 (SIST…SHAP), 371-385 (PPAS…SPST), 399-409 (KQVSSNETSAQ), 443-452 (KISSFNSKAG), and 498-511 (SSAS…SVIT). Residues 522–561 (VVPEAPSVHQPPAAPVAPEVPSAPQRPAAPVVPEAPSVPQ) are compositionally biased toward low complexity. Pro residues-rich tracts occupy residues 587-596 (PSVPQPPVAP) and 602-611 (PSVPQPPVAP). Positions 612 to 622 (VAPEVPSVPQR) are enriched in low complexity. 2 consecutive SH3 domains span residues 725–785 (PTKT…ITGP) and 800–857 (GPGK…VEEI).

This Schizosaccharomyces pombe (strain 972 / ATCC 24843) (Fission yeast) protein is Protein app1 (app1).